A 147-amino-acid chain; its full sequence is MVHLTSEEKNCITTIWSKVQVDQTGGEALGRMLVVYPWTTRFFGSFGDLSSPGAVMSNSKVQAHGAKVLTSFGEAVKHLDNLKGTYAKLSELHCDKLHVDPENFKMLGNIIVICLAEHFGKDFTPECQVAWQKLVAGVAHALAHKYH.

The residue at position 2 (V2) is an N-acetylvaline. In terms of domain architecture, Globin spans 3–147 (HLTSEEKNCI…VAHALAHKYH (145 aa)). T13 bears the Phosphothreonine mark. A Phosphoserine modification is found at S45. K60 carries the N6-acetyllysine modification. Position 64 (H64) interacts with heme b. The residue at position 83 (K83) is an N6-acetyllysine. H93 is a heme b binding site. C94 carries the post-translational modification S-nitrosocysteine. At K145 the chain carries N6-acetyllysine.

This sequence belongs to the globin family. In terms of assembly, heterotetramer of two alpha chains and two beta chains. In terms of tissue distribution, red blood cells.

Its function is as follows. Involved in oxygen transport from the lung to the various peripheral tissues. The polypeptide is Hemoglobin subunit beta-M (HBB) (Didelphis virginiana (North American opossum)).